The sequence spans 407 residues: Deacetylase Atu3266 (407 aa).

Zn(2+) contacts are provided by histidine 75, histidine 77, lysine 173, histidine 206, histidine 229, and aspartate 289. Lysine 173 is subject to N6-carboxylysine.

This sequence belongs to the metallo-dependent hydrolases superfamily. Atu3266/EF_0837 deacetylase family. In terms of assembly, homohexamer, dimer of trimers. Zn(2+) is required as a cofactor.

Its function is as follows. Esterase that catalyzes the deacetylation of acetyl-(R)-mandelate (in vitro). Can also hydrolyze acetyl glycolate, but with lower efficiency. Has very low N-acetyl-D-amino acid deacetylase activity with N-acetyl-D-serine and N-acetyl-D-threonine (in vitro). Theoretical substrate docking studies suggest that other N-acetylated amino acids may optimally occupy the active site and may in fact be the physiological substrates. In Agrobacterium fabrum (strain C58 / ATCC 33970) (Agrobacterium tumefaciens (strain C58)), this protein is Deacetylase Atu3266.